We begin with the raw amino-acid sequence, 368 residues long: Flagellar P-ring protein (368 aa).

Residues 1–22 (MLIPLARAVLALALLGAGAAHA) form the signal peptide.

This sequence belongs to the FlgI family. The basal body constitutes a major portion of the flagellar organelle and consists of four rings (L,P,S, and M) mounted on a central rod.

Its subcellular location is the periplasm. The protein localises to the bacterial flagellum basal body. Its function is as follows. Assembles around the rod to form the L-ring and probably protects the motor/basal body from shearing forces during rotation. This chain is Flagellar P-ring protein, found in Bordetella bronchiseptica (strain ATCC BAA-588 / NCTC 13252 / RB50) (Alcaligenes bronchisepticus).